The chain runs to 187 residues: Peptidoglycan-recognition protein 2 (187 aa).

The first 19 residues, 1–19 (MKAFLVALVVAIELTLVFA), serve as a signal peptide directing secretion. Intrachain disulfides connect C21–C144 and C58–C64. One can recognise an N-acetylmuramoyl-L-alanine amidase domain in the interval 43-170 (KPLKYVIIHH…RTVRPTDSPG (128 aa)).

The protein belongs to the N-acetylmuramoyl-L-alanine amidase 2 family. In terms of tissue distribution, localizes to plasma (at protein level).

The protein localises to the secreted. In terms of biological role, peptidoglycan-recognition protein probably involved in innate immunity by binding to peptidoglycans (PGN) of bacteria and activating the prophenoloxidase (proPO) cascade immune response. Binds to 1,3-beta-D-glucan and PGN. This is Peptidoglycan-recognition protein 2 (PGRP-2) from Holotrichia diomphalia (Korean black chafer).